The sequence spans 218 residues: Uracil-DNA glycosylase (218 aa).

Asp-59 serves as the catalytic Proton acceptor.

Belongs to the uracil-DNA glycosylase (UDG) superfamily. UNG family.

Its subcellular location is the cytoplasm. The catalysed reaction is Hydrolyzes single-stranded DNA or mismatched double-stranded DNA and polynucleotides, releasing free uracil.. Functionally, excises uracil residues from the DNA which can arise as a result of misincorporation of dUMP residues by DNA polymerase or due to deamination of cytosine. The chain is Uracil-DNA glycosylase from Staphylococcus aureus (strain bovine RF122 / ET3-1).